We begin with the raw amino-acid sequence, 394 residues long: Chaperone protein DnaJ (394 aa).

Positions 4–68 constitute a J domain; sequence DYYEILGVSR…ELRARYDRFG (65 aa). The CR-type zinc finger occupies 136 to 218; that stretch reads GGEKQIRISH…CNGEGLAQTT (83 aa). Residues Cys-149, Cys-152, Cys-166, Cys-169, Cys-192, Cys-195, Cys-206, and Cys-209 each coordinate Zn(2+). 4 CXXCXGXG motif repeats span residues 149–156, 166–173, 192–199, and 206–213; these read CPVCGGSG, CPTCGGAG, and CYNCNGEG.

Belongs to the DnaJ family. Homodimer. Zn(2+) serves as cofactor.

It is found in the cytoplasm. Functionally, participates actively in the response to hyperosmotic and heat shock by preventing the aggregation of stress-denatured proteins and by disaggregating proteins, also in an autonomous, DnaK-independent fashion. Unfolded proteins bind initially to DnaJ; upon interaction with the DnaJ-bound protein, DnaK hydrolyzes its bound ATP, resulting in the formation of a stable complex. GrpE releases ADP from DnaK; ATP binding to DnaK triggers the release of the substrate protein, thus completing the reaction cycle. Several rounds of ATP-dependent interactions between DnaJ, DnaK and GrpE are required for fully efficient folding. Also involved, together with DnaK and GrpE, in the DNA replication of plasmids through activation of initiation proteins. The protein is Chaperone protein DnaJ of Synechococcus sp. (strain JA-3-3Ab) (Cyanobacteria bacterium Yellowstone A-Prime).